The primary structure comprises 194 residues: CASP-like protein 4D1 (194 aa).

Over 1 to 10 (MASRTVLLPS) the chain is Cytoplasmic. A helical transmembrane segment spans residues 11-31 (AVLILRLLSLGLLAASLALIA). The Extracellular portion of the chain corresponds to 32–55 (ADKLNVDSDPPQRYTFRDVYAYRY). Residues 56 to 76 (VLAVAVIGCAYTLLQLPLAAV) traverse the membrane as a helical segment. Residues 77–94 (SIIASGNNKRGIGAGGGS) are Cytoplasmic-facing. Residues 95-115 (VAVALLVLVLLADVVFALLLA) traverse the membrane as a helical segment. Residues 116–161 (TGAAAGFAFTYDVKRYLDGQFDDDSIGTPEVDKLHRDMDKFFDLAY) are Extracellular-facing. The helical transmembrane segment at 162-182 (AAAGLMLAAAACMALVIMLSV) threads the bilayer. Residues 183-194 (YSLARQVRSDYI) are Cytoplasmic-facing.

The protein belongs to the Casparian strip membrane proteins (CASP) family. Homodimer and heterodimers.

It localises to the cell membrane. The sequence is that of CASP-like protein 4D1 from Sorghum bicolor (Sorghum).